Here is a 245-residue protein sequence, read N- to C-terminus: 1-(5-phosphoribosyl)-5-[(5-phosphoribosylamino)methylideneamino] imidazole-4-carboxamide isomerase (245 aa).

The active-site Proton acceptor is the D7. D129 functions as the Proton donor in the catalytic mechanism.

It belongs to the HisA/HisF family.

The protein localises to the cytoplasm. It catalyses the reaction 1-(5-phospho-beta-D-ribosyl)-5-[(5-phospho-beta-D-ribosylamino)methylideneamino]imidazole-4-carboxamide = 5-[(5-phospho-1-deoxy-D-ribulos-1-ylimino)methylamino]-1-(5-phospho-beta-D-ribosyl)imidazole-4-carboxamide. Its pathway is amino-acid biosynthesis; L-histidine biosynthesis; L-histidine from 5-phospho-alpha-D-ribose 1-diphosphate: step 4/9. In Shewanella sp. (strain MR-4), this protein is 1-(5-phosphoribosyl)-5-[(5-phosphoribosylamino)methylideneamino] imidazole-4-carboxamide isomerase.